The following is a 402-amino-acid chain: Aminotransferase-like protein FGM3 (402 aa).

Pyridoxal 5'-phosphate contacts are provided by residues 137–138 (TI), D218, and 282–283 (FG).

This sequence belongs to the class-V pyridoxal-phosphate-dependent aminotransferase family. Csd subfamily.

Aminotransferase-like protein; part of the Fg3_54/C64 gene cluster that mediates the biosynthesis of the octapeptide fusaoctaxin A, a virulence factor that is required for cell-to-cell invasiveness of plant host. The 2 nonribosomal peptide synthetases NRPS9 and NRPS5 form an assembly line which likely utilizes GABA as a starter unit (loaded on the unique module M1 of NRPS9) and sequentially incorporates seven extender units composed of the residues L-Ala, L-allo-Ile, L-Ser, L-Val, L-Ser, L-Leu and L-Leu, respectively. During the process, each of the residues that are tethered on modules M3-M7 of NRPS5 containing an E domain can undergo an epimerization reaction to produce a D-configuration before the transpeptidation reaction occurs. The elongation of the peptidyl chain might be terminated by module M8-mediated L-Leu incorporation, followed by R domain-catalyzed 4 electron reduction to release the resulting octapeptide from the assembly line as an alcohol. Fusaoctaxin A is cleaved by the cluster specific ABC transporter FGM5 to the pentapeptide fusapentaxin A and the tripeptide fusatrixin A. The other enzymes from the cluster, FGM1, FGM2, FGM3 and FGM9 seem not to be involved in the biosynthesis of fusaoctaxin A and their functions have still to be determined. The protein is Aminotransferase-like protein FGM3 of Gibberella zeae (strain ATCC MYA-4620 / CBS 123657 / FGSC 9075 / NRRL 31084 / PH-1) (Wheat head blight fungus).